A 147-amino-acid chain; its full sequence is 3-dehydroquinate dehydratase (147 aa).

The active-site Proton acceptor is the tyrosine 24. Substrate is bound by residues asparagine 73, histidine 79, and aspartate 86. Histidine 99 acts as the Proton donor in catalysis. Substrate contacts are provided by residues leucine 100–serine 101 and arginine 110.

It belongs to the type-II 3-dehydroquinase family. Homododecamer.

It catalyses the reaction 3-dehydroquinate = 3-dehydroshikimate + H2O. Its pathway is metabolic intermediate biosynthesis; chorismate biosynthesis; chorismate from D-erythrose 4-phosphate and phosphoenolpyruvate: step 3/7. In terms of biological role, catalyzes a trans-dehydration via an enolate intermediate. This chain is 3-dehydroquinate dehydratase, found in Hyphomonas neptunium (strain ATCC 15444).